We begin with the raw amino-acid sequence, 185 residues long: Pycsar effector protein EcPycTM (185 aa).

The next 3 helical transmembrane spans lie at 32–52 (ALLL…VGYF), 63–83 (MVIF…SVLL), and 141–161 (FILS…VSWI).

It is found in the cell inner membrane. Pycsar (pyrimidine cyclase system for antiphage resistance) provides immunity against bacteriophage. The pyrimidine cyclase (PycC) synthesizes cyclic nucleotides in response to infection; these serve as specific second messenger signals. The signals activate the adjacent effector, leading to bacterial cell death and abortive phage infection. A clade E Pycsar system. Its function is as follows. The effector component of a two-gene Pycsar system. Expression of this and adjacent cytidylate cyclase EcPycC (AC P0DV24) confers resistance to bacteriophage P1 and T5; this protein is required for resistance. When cells expressing the Pycsar system are infected by phage T5 at low multiplicity of infection (0.2 MOI) the culture survives, at 2.0 MOI bacteria enter growth arrest. The same cells enter growth arrest after exposure to 250 uM cCMP but not cUMP; this effector protein responds only to cCMP, usually produced by its cognate NTP cyclase. Some of the cells treated with cCMP have abnormal membrane protrusions, probably due to effects on membrane integrity. This is Pycsar effector protein EcPycTM from Escherichia coli.